The chain runs to 301 residues: Glutamine amidotransferase-like protein GlxB (301 aa).

Cys2 is a catalytic residue. The region spanning 2–298 (CGIVGLFLKD…PATVYFWDHQ (297 aa)) is the Glutamine amidotransferase type-2 domain.

In Rhizobium meliloti (strain 1021) (Ensifer meliloti), this protein is Glutamine amidotransferase-like protein GlxB (glxB).